Reading from the N-terminus, the 485-residue chain is Malonate-semialdehyde dehydrogenase (485 aa).

NAD(+)-binding residues include Phe155, Lys179, Glu182, Arg183, and Ser232. The active-site Nucleophile is the Cys287. Glu386 provides a ligand contact to NAD(+).

It belongs to the aldehyde dehydrogenase family. IolA subfamily. Homotetramer.

The enzyme catalyses 3-oxopropanoate + NAD(+) + CoA + H2O = hydrogencarbonate + acetyl-CoA + NADH + H(+). It carries out the reaction 2-methyl-3-oxopropanoate + NAD(+) + CoA + H2O = propanoyl-CoA + hydrogencarbonate + NADH + H(+). It participates in polyol metabolism; myo-inositol degradation into acetyl-CoA; acetyl-CoA from myo-inositol: step 7/7. In terms of biological role, catalyzes the oxidation of malonate semialdehyde (MSA) and methylmalonate semialdehyde (MMSA) into acetyl-CoA and propanoyl-CoA, respectively. Is involved in a myo-inositol catabolic pathway. Bicarbonate, and not CO2, is the end-product of the enzymatic reaction. This Halalkalibacterium halodurans (strain ATCC BAA-125 / DSM 18197 / FERM 7344 / JCM 9153 / C-125) (Bacillus halodurans) protein is Malonate-semialdehyde dehydrogenase.